Here is a 622-residue protein sequence, read N- to C-terminus: Galactolipid galactosyltransferase SFR2, chloroplastic (622 aa).

The Stromal portion of the chain corresponds to 1–3 (MEL). Residues 4 to 24 (FALLIKVAGLLATVTVGANVV) form a helical; Signal-anchor membrane-spanning segment. Residues 25–622 (SYSRFRRQNL…LHPALASPFD (598 aa)) lie on the Cytoplasmic side of the membrane. Residues His-222, 266 to 267 (NE), Tyr-377, Glu-429, Trp-467, 474 to 475 (EW), and Phe-483 each bind a beta-D-glucoside. The active-site Proton donor is Glu-267. The active-site Nucleophile is the Glu-429.

This sequence belongs to the glycosyl hydrolase 1 family. As to expression, expressed in hypocotyls, cotyledons, stems, leaves, pedicels, sepals, anthers and pistils. Limited expression in roots. Not detected in petals or filaments.

It is found in the plastid. The protein resides in the chloroplast. Its subcellular location is the chloroplast outer membrane. The catalysed reaction is 2 a 1,2-diacyl-3-O-(beta-D-galactosyl)-sn-glycerol = a 1,2-diacyl-3-O-[beta-D-galactosyl-(1-&gt;6)-beta-D-galactosyl]-sn-glycerol + a 1,2-diacyl-sn-glycerol. Its activity is regulated as follows. Induced by MgCl(2). Functionally, glycosyl hydrolase family protein acting primarily as a highly specific galactosyltransferase. Synthesizes digalactosyldiacylglycerol from monogalactosyldiacylglycerol in the absence of UDP-galactose in vitro. Hydrolyzes o- and p-nitrophenyl beta-D-glucoside in vitro. Plays a role in freezing tolerance. May play a role in chloroplast protection. The chain is Galactolipid galactosyltransferase SFR2, chloroplastic from Arabidopsis thaliana (Mouse-ear cress).